The primary structure comprises 105 residues: Large ribosomal subunit protein uL24 (105 aa).

The protein belongs to the universal ribosomal protein uL24 family. Part of the 50S ribosomal subunit.

Its function is as follows. One of two assembly initiator proteins, it binds directly to the 5'-end of the 23S rRNA, where it nucleates assembly of the 50S subunit. Functionally, one of the proteins that surrounds the polypeptide exit tunnel on the outside of the subunit. The chain is Large ribosomal subunit protein uL24 from Francisella philomiragia subsp. philomiragia (strain ATCC 25017 / CCUG 19701 / FSC 153 / O#319-036).